We begin with the raw amino-acid sequence, 405 residues long: uncharacterized protein (405 aa).

The next 13 membrane-spanning stretches (helical) occupy residues 19–39 (IVSI…PLAV), 48–68 (MGFS…ATLL), 85–105 (IVVF…LADI), 106–126 (ASAW…ILGI), 129–149 (SFAG…LHIG), 156–176 (GIVT…CYAW), 178–198 (GLQG…LLAL), 224–244 (GMAL…ITLF), 252–272 (GAAF…LLFP), 283–303 (VAMI…TAAM), 309–329 (IGVL…GVVA), 344–364 (TYTV…GLVM), and 366–386 (WAGV…ALLL).

This sequence belongs to the major facilitator superfamily. YhhS family.

It localises to the cell inner membrane. This is an uncharacterized protein from Salmonella paratyphi C (strain RKS4594).